Reading from the N-terminus, the 181-residue chain is Secreted chorismate mutase (181 aa).

The N-terminal stretch at 1 to 20 is a signal peptide; sequence MLASVALAALAGVGTPHATA. Residues 21-100 enclose the Chorismate mutase domain; that stretch reads DDASPLVPLV…ATSSVEHTRF (80 aa). Residues Arg-36, Lys-47, Asp-56, 59–63, 92–96, and Arg-121 contribute to the substrate site; these read REQQV and TSSVE. Cysteines 147 and 180 form a disulfide.

As to quaternary structure, homodimer.

The protein localises to the secreted. It carries out the reaction chorismate = prephenate. It functions in the pathway metabolic intermediate biosynthesis; prephenate biosynthesis; prephenate from chorismate: step 1/1. Functionally, catalyzes the Claisen rearrangement of chorismate to prephenate. May play some role in the pathogenicity. The polypeptide is Secreted chorismate mutase (Mycolicibacterium smegmatis (strain ATCC 700084 / mc(2)155) (Mycobacterium smegmatis)).